Consider the following 218-residue polypeptide: Adenylate kinase (218 aa).

10–15 (GVGKGT) contributes to the ATP binding site. An NMP region spans residues 30-59 (STGDMLRSAIKQGTELGLKAKSFIDKGELV). AMP is bound by residues threonine 31, arginine 36, 57–59 (ELV), 86–89 (GFPR), and glutamine 93. An LID region spans residues 127–164 (GRRIAPSTGKVYHVVYNPPKVEGKCDETGEDLIIREDD). Residues arginine 128 and 137–138 (VY) each bind ATP. 2 residues coordinate AMP: arginine 161 and arginine 172. Glutamine 200 lines the ATP pocket.

This sequence belongs to the adenylate kinase family. As to quaternary structure, monomer.

The protein resides in the cytoplasm. The catalysed reaction is AMP + ATP = 2 ADP. It functions in the pathway purine metabolism; AMP biosynthesis via salvage pathway; AMP from ADP: step 1/1. In terms of biological role, catalyzes the reversible transfer of the terminal phosphate group between ATP and AMP. Plays an important role in cellular energy homeostasis and in adenine nucleotide metabolism. This Chloroherpeton thalassium (strain ATCC 35110 / GB-78) protein is Adenylate kinase.